The chain runs to 459 residues: FBD-associated F-box protein At1g61320 (459 aa).

A disordered region spans residues 1–25 (MAPPTKRTRVEMAESSNKRMKPSET). The region spanning 21–69 (KPSETVPEDVLELMMSTYLPVQSLLTTRVLSKRFRETEVRSLDLDFSGI) is the F-box domain. Positions 396 to 428 (VKIIGYKGHWHELDIVEFFVKNAPSLKRLELQM) constitute an FBD domain.

The chain is FBD-associated F-box protein At1g61320 from Arabidopsis thaliana (Mouse-ear cress).